Consider the following 566-residue polypeptide: Probable cytochrome P450 519D1 (566 aa).

Residues 1–21 (MNVFVLTFFICIIYLLFDLIK) traverse the membrane as a helical segment. The disordered stretch occupies residues 471–491 (FNNNNNNNNNNNNNNSNNKHK). Over residues 472 to 487 (NNNNNNNNNNNNNNSN) the composition is skewed to low complexity. Residue cysteine 510 coordinates heme.

Belongs to the cytochrome P450 family. Heme serves as cofactor.

It is found in the membrane. This chain is Probable cytochrome P450 519D1 (cyp519D1), found in Dictyostelium discoideum (Social amoeba).